A 138-amino-acid polypeptide reads, in one-letter code: Single-stranded DNA-binding protein 3 (138 aa).

An SSB domain is found at 1 to 104 (MINNIVLVGR…VVAENFQLLE (104 aa)). Low complexity predominate over residues 105–121 (SRNSQQQTNQSGNSSNS). The interval 105–138 (SRNSQQQTNQSGNSSNSYFGNANKMDISDDDLPF) is disordered. The Important for interaction with partner proteins signature appears at 133 to 138 (DDDLPF).

As to quaternary structure, homotetramer.

Functionally, plays an important role in DNA replication, recombination and repair. Binds to ssDNA and to an array of partner proteins to recruit them to their sites of action during DNA metabolism. The protein is Single-stranded DNA-binding protein 3 (ssb3) of Streptococcus agalactiae serotype V (strain ATCC BAA-611 / 2603 V/R).